The sequence spans 616 residues: Probable methyltransferase PMT2 (616 aa).

Over 1–13 (MALKSSSADGKTR) the chain is Cytoplasmic. The helical; Signal-anchor for type II membrane protein transmembrane segment at 14–34 (SSVQIFIVFSLCCFFYILGAW) threads the bilayer. Over 35 to 616 (QRSGFGKGDS…YWVTNSTSTH (582 aa)) the chain is Lumenal. N-linked (GlcNAc...) asparagine glycans are attached at residues N205 and N611.

The protein belongs to the methyltransferase superfamily.

The protein resides in the golgi apparatus membrane. The chain is Probable methyltransferase PMT2 from Arabidopsis thaliana (Mouse-ear cress).